The sequence spans 527 residues: Amine oxidase [flavin-containing] A (527 aa).

Residue M1 is modified to N-acetylmethionine. At M1 to S497 the chain is on the cytoplasmic side. The residue at position 383 (S383) is a Phosphoserine. C406 is modified (S-8alpha-FAD cysteine). Residues V498–M518 traverse the membrane as a helical; Anchor for type IV membrane protein segment. The Mitochondrial intermembrane segment spans residues Y519–S527. The tract at residues R520–R522 is interaction with membrane phospholipid headgroups.

It belongs to the flavin monoamine oxidase family. As to quaternary structure, monomer, homo- or heterodimer (containing two subunits of similar size). Each subunit contains a covalently bound flavin. Enzymatically active as monomer. Requires FAD as cofactor.

The protein resides in the mitochondrion outer membrane. It catalyses the reaction a secondary aliphatic amine + O2 + H2O = a primary amine + an aldehyde + H2O2. The catalysed reaction is a primary methyl amine + O2 + H2O = an aldehyde + H2O2 + NH4(+). The enzyme catalyses (R)-adrenaline + O2 + H2O = (R)-3,4-dihydroxymandelaldehyde + methylamine + H2O2. It carries out the reaction dopamine + O2 + H2O = 3,4-dihydroxyphenylacetaldehyde + H2O2 + NH4(+). It catalyses the reaction tyramine + O2 + H2O = (4-hydroxyphenyl)acetaldehyde + H2O2 + NH4(+). The catalysed reaction is (R)-noradrenaline + O2 + H2O = (R)-3,4-dihydroxymandelaldehyde + H2O2 + NH4(+). The enzyme catalyses serotonin + O2 + H2O = (5-hydroxyindol-3-yl)acetaldehyde + H2O2 + NH4(+). It carries out the reaction kynuramine + O2 + H2O = 3-(2-aminophenyl)-3-oxopropanal + H2O2 + NH4(+). It catalyses the reaction tryptamine + O2 + H2O = indole-3-acetaldehyde + H2O2 + NH4(+). The catalysed reaction is 2-phenylethylamine + O2 + H2O = 2-phenylacetaldehyde + H2O2 + NH4(+). In terms of biological role, catalyzes the oxidative deamination of primary and some secondary amine such as neurotransmitters, with concomitant reduction of oxygen to hydrogen peroxide and has important functions in the metabolism of neuroactive and vasoactive amines in the central nervous system and peripheral tissues. Preferentially oxidizes serotonin. Also catalyzes the oxidative deamination of kynuramine to 3-(2-aminophenyl)-3-oxopropanal that can spontaneously condense to 4-hydroxyquinoline. This Bos taurus (Bovine) protein is Amine oxidase [flavin-containing] A.